Here is a 208-residue protein sequence, read N- to C-terminus: 3-demethoxyubiquinol 3-hydroxylase (208 aa).

Positions 57, 87, 90, 139, 171, and 174 each coordinate Fe cation.

Belongs to the COQ7 family. It depends on Fe cation as a cofactor.

Its subcellular location is the cell membrane. It catalyses the reaction a 5-methoxy-2-methyl-3-(all-trans-polyprenyl)benzene-1,4-diol + AH2 + O2 = a 3-demethylubiquinol + A + H2O. Its pathway is cofactor biosynthesis; ubiquinone biosynthesis. Catalyzes the hydroxylation of 2-nonaprenyl-3-methyl-6-methoxy-1,4-benzoquinol during ubiquinone biosynthesis. In Burkholderia vietnamiensis (strain G4 / LMG 22486) (Burkholderia cepacia (strain R1808)), this protein is 3-demethoxyubiquinol 3-hydroxylase.